The primary structure comprises 321 residues: Ribosomal RNA small subunit methyltransferase H (321 aa).

S-adenosyl-L-methionine contacts are provided by residues 44–46, Asp64, Phe88, Asp109, and Gln116; that span reads GGH.

It belongs to the methyltransferase superfamily. RsmH family.

Its subcellular location is the cytoplasm. It catalyses the reaction cytidine(1402) in 16S rRNA + S-adenosyl-L-methionine = N(4)-methylcytidine(1402) in 16S rRNA + S-adenosyl-L-homocysteine + H(+). In terms of biological role, specifically methylates the N4 position of cytidine in position 1402 (C1402) of 16S rRNA. In Methylobacillus flagellatus (strain ATCC 51484 / DSM 6875 / VKM B-1610 / KT), this protein is Ribosomal RNA small subunit methyltransferase H.